Reading from the N-terminus, the 286-residue chain is MSKDNLHRYLFENADVRGELVQLEQSYQEVLSAHNYPAPIQNLLGQLLAATSLLTATLKFNGDISVQLQGDGPVSLAVINGNNLQQLRGVARFKGELSSDGDLQQLFGKGHMVITLTPTEGERYQGVVALDKPTLAGCLEEYFAQSEQLPTSITLFANGKQAAGMLLQVLPTEGDHNAEFEHLEQLTATVKAEELFELEAEEVLHRLYHQEEVRLFEPVAVTFSCTCSRERSASAIRTVSREEIESILAEQGKIEMGCEYCNTNYSFDSIDVAAIFSNTQAPETKQ.

2 cysteine pairs are disulfide-bonded: Cys225–Cys227 and Cys258–Cys261.

Belongs to the HSP33 family. In terms of processing, under oxidizing conditions two disulfide bonds are formed involving the reactive cysteines. Under reducing conditions zinc is bound to the reactive cysteines and the protein is inactive.

The protein localises to the cytoplasm. Redox regulated molecular chaperone. Protects both thermally unfolding and oxidatively damaged proteins from irreversible aggregation. Plays an important role in the bacterial defense system toward oxidative stress. This is 33 kDa chaperonin from Shewanella woodyi (strain ATCC 51908 / MS32).